We begin with the raw amino-acid sequence, 335 residues long: MCGRTACTLAPDDVRKACTYRDKQGGRKWPNWRDGDSDKYQPSYNKSPQSNSPVLLSLKHFQKDADSSERVLAAMRWGLIPSWFNEPDPSKMQYKTNNCRSDTMTEKALYKASLFKGKRCVVLADGFYEWQRQNSEKQPYYIYFPQIKAEKSPAEQDITDWNGQRLLTMAGLFDCWEPPNGGETLYSYTVITVDSSKTMNWIHDRMPAILDGDEAVRKWLDFGEVPTKDALKLIHPIENITYHPVSTVVNNSRNNTPECMAAIILTQKKGPALSASSKKMLDWLQNKSPKKEESHSIQSPKLSQFGAPPKKTSAGLMQQWLKKEDGEPSPKRAKK.

The active-site Nucleophile is Cys2. Cys2 bears the Thiazolidine linkage to a ring-opened DNA abasic site mark. Residues 24–39 (QGGRKWPNWRDGDSDK) show a composition bias toward basic and acidic residues. The tract at residues 24–51 (QGGRKWPNWRDGDSDKYQPSYNKSPQSN) is disordered. The segment covering 40–51 (YQPSYNKSPQSN) has biased composition (polar residues). Residue Glu129 is part of the active site. Residues 284-335 (LQNKSPKKEESHSIQSPKLSQFGAPPKKTSAGLMQQWLKKEDGEPSPKRAKK) are disordered. Residues 321-335 (LKKEDGEPSPKRAKK) show a composition bias toward basic and acidic residues.

This sequence belongs to the SOS response-associated peptidase family. In terms of processing, ubiquitination of the hmces DNA-protein cross-link by rfwd3 may promotes its degradation.

It is found in the chromosome. Formation and reversal of DNA-protein cross-link depends on DNA context. Catalyzes formation of the thiazolidine linkage in presence of abasic sites in single-stranded DNA. Mediates the reversal of the thiazolidine cross-link in presence of double stranded DNA. Its function is as follows. Sensor of abasic sites in single-stranded DNA (ssDNA) required to preserve genome integrity by promoting error-free repair of abasic sites. Acts as an enzyme that recognizes and binds abasic sites in ssDNA at replication forks and chemically modifies the lesion by forming a covalent cross-link with DNA: forms a stable thiazolidine linkage between a ring-opened abasic site and the alpha-amino and sulfhydryl substituents of its N-terminal catalytic cysteine residue. The hmces DNA-protein cross-link is then either reversed or degraded. Hmces is able to catalyze the reversal of its thiazolidine cross-link and cycle between a cross-link and a non-cross-linked state depending on DNA context: mediates self-reversal of the thiazolidine cross-link in double stranded DNA, allowing apex1 to initiate downstream repair of abasic sites. The hmces DNA-protein cross-link can also be degraded by the sprtn metalloprotease following unfolding by the brip1/fancj helicase. Promotes error-free repair of abasic sites by protecting abasic sites from translesion synthesis (TLS) polymerases and endonucleases that are error-prone and would generate mutations and double-strand breaks. Acts as a protease: mediates autocatalytic processing of its N-terminal methionine in order to expose the catalytic cysteine. The hmces DNA-protein cross-link is then either reversed or degraded. According to a model, the HMCES DNA-protein cross-link. The polypeptide is Abasic site processing protein HMCES (Xenopus tropicalis (Western clawed frog)).